Here is a 115-residue protein sequence, read N- to C-terminus: Ribonuclease P protein component (115 aa).

Belongs to the RnpA family. Consists of a catalytic RNA component (M1 or rnpB) and a protein subunit.

It catalyses the reaction Endonucleolytic cleavage of RNA, removing 5'-extranucleotides from tRNA precursor.. In terms of biological role, RNaseP catalyzes the removal of the 5'-leader sequence from pre-tRNA to produce the mature 5'-terminus. It can also cleave other RNA substrates such as 4.5S RNA. The protein component plays an auxiliary but essential role in vivo by binding to the 5'-leader sequence and broadening the substrate specificity of the ribozyme. The protein is Ribonuclease P protein component of Natranaerobius thermophilus (strain ATCC BAA-1301 / DSM 18059 / JW/NM-WN-LF).